The following is a 338-amino-acid chain: Fructose-1,6-bisphosphatase class 1 1 (338 aa).

Positions 88, 107, 109, and 110 each coordinate Mg(2+). Residues 110-113 (DGSS) and asparagine 196 contribute to the substrate site. Glutamate 268 serves as a coordination point for Mg(2+).

The protein belongs to the FBPase class 1 family. Homotetramer. It depends on Mg(2+) as a cofactor.

The protein resides in the cytoplasm. It carries out the reaction beta-D-fructose 1,6-bisphosphate + H2O = beta-D-fructose 6-phosphate + phosphate. It participates in carbohydrate biosynthesis; Calvin cycle. This is Fructose-1,6-bisphosphatase class 1 1 from Bradyrhizobium sp. (strain BTAi1 / ATCC BAA-1182).